The sequence spans 130 residues: uncharacterized protein (130 aa).

The first 18 residues, 1–18, serve as a signal peptide directing secretion; it reads MVEVWWSLIGAAVPALIA.

This is an uncharacterized protein from Arabidopsis thaliana (Mouse-ear cress).